Here is a 104-residue protein sequence, read N- to C-terminus: uncharacterized protein (104 aa).

This is an uncharacterized protein from Dictyostelium discoideum (Social amoeba).